The following is a 237-amino-acid chain: MKLTPKELDKLMLHYAGRLAEEALARGVKLNYTEAVALISGRVMEKARDGNKSVADLMQEGRTWLKKENVMDGVASMIHEVGIEANFPDGTKLVTIHTPVEDNGKLAPGEVFLKNEDITINAGKEAISLKVKNKGDRPVQVGSHFHFFEVNKLLDFDRAKSFCKRLDIASGTAVRFEPGEEKSVELIDIGGNKRIYGFNSLVDRQADADGKKLGLKRAKEKGFGSVNCGCEATKDKQ.

The tract at residues 1–102 (MKLTPKELDK…LVTIHTPVED (102 aa)) is urease gamma. The tract at residues 103-237 (NGKLAPGEVF…CGCEATKDKQ (135 aa)) is urease beta.

The protein in the N-terminal section; belongs to the urease gamma subunit family. In the C-terminal section; belongs to the urease beta subunit family. In terms of assembly, heterohexamer of 3 UreA (alpha) and 3 UreB (beta) subunits.

It localises to the cytoplasm. The catalysed reaction is urea + 2 H2O + H(+) = hydrogencarbonate + 2 NH4(+). Its pathway is nitrogen metabolism; urea degradation; CO(2) and NH(3) from urea (urease route): step 1/1. The sequence is that of Urease subunit alpha from Helicobacter felis.